Reading from the N-terminus, the 165-residue chain is Putative pre-16S rRNA nuclease (165 aa).

This sequence belongs to the YqgF nuclease family.

The protein localises to the cytoplasm. In terms of biological role, could be a nuclease involved in processing of the 5'-end of pre-16S rRNA. This Brucella anthropi (strain ATCC 49188 / DSM 6882 / CCUG 24695 / JCM 21032 / LMG 3331 / NBRC 15819 / NCTC 12168 / Alc 37) (Ochrobactrum anthropi) protein is Putative pre-16S rRNA nuclease.